The sequence spans 147 residues: Large ribosomal subunit protein uL13 (147 aa).

The protein belongs to the universal ribosomal protein uL13 family. As to quaternary structure, part of the 50S ribosomal subunit.

In terms of biological role, this protein is one of the early assembly proteins of the 50S ribosomal subunit, although it is not seen to bind rRNA by itself. It is important during the early stages of 50S assembly. This chain is Large ribosomal subunit protein uL13, found in Levilactobacillus brevis (strain ATCC 367 / BCRC 12310 / CIP 105137 / JCM 1170 / LMG 11437 / NCIMB 947 / NCTC 947) (Lactobacillus brevis).